The chain runs to 77 residues: Small ribosomal subunit protein bS20 (77 aa).

It belongs to the bacterial ribosomal protein bS20 family.

Functionally, binds directly to 16S ribosomal RNA. This Lactococcus lactis subsp. cremoris (strain MG1363) protein is Small ribosomal subunit protein bS20.